The primary structure comprises 311 residues: AT-hook motif nuclear-localized protein 27 (311 aa).

The disordered stretch occupies residues 40–105 (HHHQHQQHQQ…KNKAKPPIIV (66 aa)). Over residues 55–75 (DDSRESDHSNKDHHQQGRPDS) the composition is skewed to basic and acidic residues. The segment at residues 86 to 98 (KRPRGRPPGSKNK) is a DNA-binding region (a.T hook). A PPC domain is found at 110 to 258 (PNALRSHVLE…EEGGGGGGGG (149 aa)). Residues 178–183 (GRFEIL) are required for the binding to non-AHL interactors. The disordered stretch occupies residues 246–311 (EEEEEGGGGG…GAGTPSRPPF (66 aa)). Positions 252-262 (GGGGGGGGGGP) are enriched in gly residues. Over residues 263-277 (PQMQQAPSASPPSGV) the composition is skewed to low complexity. Residues 278-292 (TGQGQLGGNVGGYGF) show a composition bias toward gly residues.

As to quaternary structure, homodimer. Interacts with AHL12, AHL25, AHL29, TCP4, TCP13, EF114, ATAF2/NAC081, histone H2B.1, histone H3.3 and histone H4. In terms of tissue distribution, expressed in the hypocotyl and the vascular tissue of seedling.

It localises to the nucleus. In terms of biological role, transcription factor that specifically binds AT-rich DNA sequences related to the nuclear matrix attachment regions (MARs). Negatively regulates plant innate immunity (PTI) to pathogens through the down-regulation of the PAMP-triggered FRK1 expression. Acts redundantly with AHL18, AHL22 and AHL29 in the regulation of flowering and regulation of the hypocotyl elongation. Acts as a chromatin remodeling factor that negatively regulates the leaf senescence. Acts redundantly with AHL29/SOB3 to modulate hypocotyl growth inhibition in response to light. The chain is AT-hook motif nuclear-localized protein 27 from Arabidopsis thaliana (Mouse-ear cress).